The chain runs to 618 residues: DNA mismatch repair protein MutL (618 aa).

The span at 366–381 shows a compositional bias: low complexity; that stretch reads AEPTAAREPATPRYSG. Positions 366-403 are disordered; the sequence is AEPTAAREPATPRYSGGASGGNGGRQSAGGWPHAQPGY. A compositionally biased stretch (gly residues) spans 382-392; the sequence is GASGGNGGRQS.

Belongs to the DNA mismatch repair MutL/HexB family.

Its function is as follows. This protein is involved in the repair of mismatches in DNA. It is required for dam-dependent methyl-directed DNA mismatch repair. May act as a 'molecular matchmaker', a protein that promotes the formation of a stable complex between two or more DNA-binding proteins in an ATP-dependent manner without itself being part of a final effector complex. In Salmonella schwarzengrund (strain CVM19633), this protein is DNA mismatch repair protein MutL.